A 699-amino-acid polypeptide reads, in one-letter code: Elongation factor G (699 aa).

One can recognise a tr-type G domain in the interval 8-283; sequence EQIRNIGICA…AIVDFLPSPI (276 aa). GTP is bound by residues 17–24, 81–85, and 135–138; these read AHIDAGKT, DTPGH, and NKMD.

This sequence belongs to the TRAFAC class translation factor GTPase superfamily. Classic translation factor GTPase family. EF-G/EF-2 subfamily.

The protein localises to the cytoplasm. In terms of biological role, catalyzes the GTP-dependent ribosomal translocation step during translation elongation. During this step, the ribosome changes from the pre-translocational (PRE) to the post-translocational (POST) state as the newly formed A-site-bound peptidyl-tRNA and P-site-bound deacylated tRNA move to the P and E sites, respectively. Catalyzes the coordinated movement of the two tRNA molecules, the mRNA and conformational changes in the ribosome. The sequence is that of Elongation factor G (fusA) from Rickettsia prowazekii (strain Madrid E).